The sequence spans 409 residues: Broad specificity amino-acid racemase (409 aa).

A signal peptide spans 1–23; it reads MPFSRTLLALSLGMALLQNPAFA. A disulfide bridge links cysteine 70 with cysteine 96. Lysine 74 functions as the Proton acceptor in the catalytic mechanism. Lysine 74 is subject to N6-(pyridoxal phosphate)lysine. A substrate-binding site is contributed by arginine 173. Residue tyrosine 300 is the Proton acceptor of the active site. Substrate is bound at residue methionine 348.

It belongs to the alanine racemase family. Bsr subfamily. In terms of assembly, homodimer. It depends on pyridoxal 5'-phosphate as a cofactor.

It localises to the periplasm. The catalysed reaction is an L-alpha-amino acid = a D-alpha-amino acid. It catalyses the reaction L-lysine = D-lysine. The enzyme catalyses L-arginine = D-arginine. It carries out the reaction L-ornithine = D-ornithine. The catalysed reaction is L-alanine = D-alanine. It catalyses the reaction L-methionine = D-methionine. Amino-acid racemase able to utilize a broad range of substrates. Is mostly active with lysine and arginine and, to a lesser extent, with ornithine, whereas is about 10 times less active with alanine, methionine and ethionine. With phenylalanine as substrate only a trace activity is detectable, and is inactive with glutamate. Plays a key role in the catabolism of D-arginine and D-lysine, that allows P.taetrolens strain NBRC 3460 to grow on these basic D-amino acids as a sole carbon source. This chain is Broad specificity amino-acid racemase, found in Pseudomonas taetrolens.